A 132-amino-acid polypeptide reads, in one-letter code: Small ribosomal subunit protein uS8c (132 aa).

This sequence belongs to the universal ribosomal protein uS8 family. As to quaternary structure, part of the 30S ribosomal subunit.

It is found in the plastid. The protein resides in the chloroplast. Functionally, one of the primary rRNA binding proteins, it binds directly to 16S rRNA central domain where it helps coordinate assembly of the platform of the 30S subunit. In Nymphaea alba (White water-lily), this protein is Small ribosomal subunit protein uS8c (rps8).